The chain runs to 332 residues: Ribosomal RNA small subunit methyltransferase H (332 aa).

S-adenosyl-L-methionine-binding positions include 36–38, Asp54, Phe81, Asp102, and Gln109; that span reads GGY.

The protein belongs to the methyltransferase superfamily. RsmH family.

The protein resides in the cytoplasm. It carries out the reaction cytidine(1402) in 16S rRNA + S-adenosyl-L-methionine = N(4)-methylcytidine(1402) in 16S rRNA + S-adenosyl-L-homocysteine + H(+). Its function is as follows. Specifically methylates the N4 position of cytidine in position 1402 (C1402) of 16S rRNA. The protein is Ribosomal RNA small subunit methyltransferase H of Nitrobacter winogradskyi (strain ATCC 25391 / DSM 10237 / CIP 104748 / NCIMB 11846 / Nb-255).